The primary structure comprises 227 residues: 7-cyano-7-deazaguanine synthase (227 aa).

Val-11–Leu-21 is a binding site for ATP. 4 residues coordinate Zn(2+): Cys-192, Cys-200, Cys-203, and Cys-206.

The protein belongs to the QueC family. Zn(2+) is required as a cofactor.

It catalyses the reaction 7-carboxy-7-deazaguanine + NH4(+) + ATP = 7-cyano-7-deazaguanine + ADP + phosphate + H2O + H(+). It functions in the pathway purine metabolism; 7-cyano-7-deazaguanine biosynthesis. Its function is as follows. Catalyzes the ATP-dependent conversion of 7-carboxy-7-deazaguanine (CDG) to 7-cyano-7-deazaguanine (preQ(0)). In Persephonella marina (strain DSM 14350 / EX-H1), this protein is 7-cyano-7-deazaguanine synthase.